Here is a 683-residue protein sequence, read N- to C-terminus: MLRQWQELAEQVREHQFRYYVRDAPVITDAEFDELLRRLEALEEQYPELRTPDSPTQLVGGAGFATEFEPVEHLERMLSLDNAFNTEELTAWAGRIHADVGDSAAYLCELKIDGVALSLVYEGGRLTRASTRGDGRTGEDVTLNARTIEDVPERLSHSEDHRMPEVLEVRGEVFFRVADFQALNASLVEEGKAPFANPRNSAAGSLRQKDPAVTARRRLRMICHGLGHTEGFRPATLHQAYLALQAWGLPVSQHTTLVADLAEVQARIDYWGEHRHEVDHEIDGVVVKVDDVALQRRLGSTSRAPRWAIAYKYPPEEAQTKLLDIRVNVGRTGRVTPFAFMTPVKVAGSTVAQATLHNASEVKRKGVLIGDTVVIRKAGDVIPEVLGPVVDLRDGSEREFVMPTTCPECGTPLAPEKEGDADIRCPNTRSCPGQLRERVFHVSSRNALDIEMLGYEAGAALLSARVIGDEGDLFGLTEEELLRTDLFRTKAGDLSANGRRLLANLDKAKAAPLWRVLVALSIRHVGPTAARALATEFGSIDAIVAATTEQLAAVEGVGPTIASAVSEWFTVDWHREIVERWRAAGVRMADERDDSVPRTLAGVTVVVTGSLPGFSRDEAKEAIVTRGGKAAGSVSKKTSYVVAGDAPGSKYDKAVELGVPILDEDGFRKLLEQGPPAEAGEPT.

Residues 29–33 (DAEFD), 79–80 (SL), and Glu-109 contribute to the NAD(+) site. Lys-111 serves as the catalytic N6-AMP-lysine intermediate. NAD(+)-binding residues include Arg-132, Glu-172, Lys-288, and Lys-312. The Zn(2+) site is built by Cys-406, Cys-409, Cys-425, and Cys-431. Residues 595 to 683 (SVPRTLAGVT…GPPAEAGEPT (89 aa)) form the BRCT domain.

Belongs to the NAD-dependent DNA ligase family. LigA subfamily. The cofactor is Mg(2+). Requires Mn(2+) as cofactor.

It catalyses the reaction NAD(+) + (deoxyribonucleotide)n-3'-hydroxyl + 5'-phospho-(deoxyribonucleotide)m = (deoxyribonucleotide)n+m + AMP + beta-nicotinamide D-nucleotide.. Its function is as follows. DNA ligase that catalyzes the formation of phosphodiester linkages between 5'-phosphoryl and 3'-hydroxyl groups in double-stranded DNA using NAD as a coenzyme and as the energy source for the reaction. It is essential for DNA replication and repair of damaged DNA. The protein is DNA ligase of Mycobacterium ulcerans (strain Agy99).